Reading from the N-terminus, the 473-residue chain is 3-isopropylmalate dehydratase large subunit (473 aa).

C349, C409, and C412 together coordinate [4Fe-4S] cluster.

It belongs to the aconitase/IPM isomerase family. LeuC type 1 subfamily. As to quaternary structure, heterodimer of LeuC and LeuD. Requires [4Fe-4S] cluster as cofactor.

It catalyses the reaction (2R,3S)-3-isopropylmalate = (2S)-2-isopropylmalate. The protein operates within amino-acid biosynthesis; L-leucine biosynthesis; L-leucine from 3-methyl-2-oxobutanoate: step 2/4. Functionally, catalyzes the isomerization between 2-isopropylmalate and 3-isopropylmalate, via the formation of 2-isopropylmaleate. The protein is 3-isopropylmalate dehydratase large subunit of Gloeobacter violaceus (strain ATCC 29082 / PCC 7421).